Consider the following 199-residue polypeptide: Ribonuclease HII (199 aa).

In terms of domain architecture, RNase H type-2 spans 13 to 199; that stretch reads GLVAGVDEVG…FAPIAKILCG (187 aa). A divalent metal cation-binding residues include aspartate 19, glutamate 20, and aspartate 110.

Belongs to the RNase HII family. Mn(2+) serves as cofactor. The cofactor is Mg(2+).

It is found in the cytoplasm. The catalysed reaction is Endonucleolytic cleavage to 5'-phosphomonoester.. In terms of biological role, endonuclease that specifically degrades the RNA of RNA-DNA hybrids. This is Ribonuclease HII from Jannaschia sp. (strain CCS1).